The sequence spans 222 residues: Cytochrome b6 (222 aa).

A helical transmembrane segment spans residues 39 to 59 (IFYCLGGITLVCFLIQFATGF). Residue cysteine 42 coordinates heme c. The heme b site is built by histidine 93 and histidine 107. 3 consecutive transmembrane segments (helical) span residues 97–117 (ASMM…TGGF), 123–143 (LTWV…VTGY), and 193–213 (LHTF…FLMI). 2 residues coordinate heme b: histidine 194 and histidine 209.

Belongs to the cytochrome b family. PetB subfamily. As to quaternary structure, the 4 large subunits of the cytochrome b6-f complex are cytochrome b6, subunit IV (17 kDa polypeptide, PetD), cytochrome f and the Rieske protein, while the 4 small subunits are PetG, PetL, PetM and PetN. The complex functions as a dimer. Requires heme b as cofactor. It depends on heme c as a cofactor.

It localises to the cellular thylakoid membrane. Its function is as follows. Component of the cytochrome b6-f complex, which mediates electron transfer between photosystem II (PSII) and photosystem I (PSI), cyclic electron flow around PSI, and state transitions. This Trichodesmium erythraeum (strain IMS101) protein is Cytochrome b6.